We begin with the raw amino-acid sequence, 373 residues long: MASYGFPLTASSLVDWTSLTFSPIEVNGHIQCTYSPEVAEWGAPHFVKDPYLRVHGLAPALNYGQQIFEGMKAFRTPTGSIRLFRPKMNAVRFAHSASFVAIPPVPEALFLRAVHLAVGLNSEFVPPYDSRGSALYIRPIAFASSATVNLAPADHFTFCVFVMPVAPLSTGAGQGLRALVVEDVDRAAPKGTGSAKVGGNYAPIVTTMQRAKADGYGLTLHLDSATHTMVDEFSASGFIGVRVDAGKTTMVVPDSPTILRSITVDSMCRIAESFGWQVQRRAVSFTELAELSEAFAVGTAFILTPVRAITRPCTHTCIEYTADYRSSASAYTRLLETLQGIQQGWLDDAWGWTEEVQDPSSDEFITDTVQARR.

Residue Arg92 coordinates pyridoxal 5'-phosphate. N6-(pyridoxal phosphate)lysine is present on Lys196. Pyridoxal 5'-phosphate is bound at residue Glu232.

It belongs to the class-IV pyridoxal-phosphate-dependent aminotransferase family. Pyridoxal 5'-phosphate is required as a cofactor.

It functions in the pathway mycotoxin biosynthesis. In terms of biological role, transaminase; part of the gene clusters that mediate the biosynthesis of AM-toxins, host-selective toxins (HSTs) causing Alternaria blotch on apple, a worldwide distributed disease. AM-toxins are cyclic depsipeptides containing the 3 residues 2-hydroxy-isovaleric acid (2-HIV), dehydroalanine, L-alanine which are common for all 3 AM-toxins I to III. The fourth precursor is L-alpha-amino-methoxyphenyl-valeric acid (L-Amv) for AM-toxin I, L-alpha-amino-phenyl-valeric acid (L-Apv) for AM-toxin II, and L-alpha-amino-hydroxyphenyl-valeric acid (L-Ahv) for AM-toxin III. AM-toxins have two target sites for affecting susceptible apple cells; they cause invagination of the plasma membrane and electrolyte loss and chloroplast disorganization. The non-ribosomal peptide synthetase AMT1 contains 4 catalytic modules and is responsible for activation of each residue in AM-toxin. The aldo-keto reductase AMT2 catalyzes the conversion of 2-keto-isovaleric acid (2-KIV) to 2-hydroxy-isovaleric acid (2-HIV), one of the precursor residues incorporated by AMT1 during AM-toxin biosynthesis, by reduction of its ketone to an alcohol. The cytochrome P450 monooxygenase AMT3 and the thioesterase AMT4 are also important for AM-toxin production, but their exact function within the AM-toxin biosynthesis are not known yet. Up to 21 proteins (including AMT1 to AMT4) are predicted to be involved in AM-toxin biosynthesis since their expression is highly up-regulated in AM-toxin-producing cultures. In Alternaria alternata (Alternaria rot fungus), this protein is Transaminase AMT5.